Here is a 460-residue protein sequence, read N- to C-terminus: Hydroxymethylglutaryl-CoA synthase MYCGRDRAFT_54740 (460 aa).

Ala35 lines the (3S)-3-hydroxy-3-methylglutaryl-CoA pocket. The Proton donor/acceptor role is filled by Glu86. Positions 120, 158, 162, 212, 262, 271, 339, and 373 each coordinate (3S)-3-hydroxy-3-methylglutaryl-CoA. Cys120 (acyl-thioester intermediate) is an active-site residue. His262 serves as the catalytic Proton donor/acceptor.

Belongs to the thiolase-like superfamily. HMG-CoA synthase family.

The enzyme catalyses acetoacetyl-CoA + acetyl-CoA + H2O = (3S)-3-hydroxy-3-methylglutaryl-CoA + CoA + H(+). The protein operates within siderophore biosynthesis. Its function is as follows. Hydroxymethylglutaryl-CoA synthase involved in the biosynthesis of a ferrichrome A-like siderophors which may contribute to organismal virulence. The first step of siderophore biosynthesis is performed by the HMG-CoA synthase (HMGS) MYCGRDRAFT_54740 which catalyzes the generation of HMG-CoA and CoA using acetoacetyl-CoA and acetyl-CoA as substrates. The enoyl-CoA isomerase/hydratase MYCGRDRAFT_76805 then catalyzes the conversion of HMG-CoA to methylglutaconyl-CoA. The acyltransferase MYCGRDRAFT_85486 then fuses methylglutaconyl-CoA with hydroxyornithine to yield methylglutaconyl hydroxyornithine. Methylglutaconyl hydroxyornithine is then available for use by the nonribosomal peptide synthetase NRPS2 to generate the ferrichrome A-like siderophore. The protein is Hydroxymethylglutaryl-CoA synthase MYCGRDRAFT_54740 (ERG13) of Zymoseptoria tritici (strain CBS 115943 / IPO323) (Speckled leaf blotch fungus).